Reading from the N-terminus, the 315-residue chain is Probable cell division protein WhiA (315 aa).

Residues 280–313 constitute a DNA-binding region (H-T-H motif); the sequence is SLKELGQMLDPQVGKSGINHRLRKIEKIAEELRT.

It belongs to the WhiA family.

Functionally, involved in cell division and chromosome segregation. This Clostridium botulinum (strain Alaska E43 / Type E3) protein is Probable cell division protein WhiA.